A 613-amino-acid polypeptide reads, in one-letter code: Sulfhydryl oxidase 1 (613 aa).

The first 30 residues, 1 to 30, serve as a signal peptide directing secretion; that stretch reads MTGCGRRSGWLPPLRLLLLPLLLGGPGVGA. Positions 37 to 157 constitute a Thioredoxin domain; it reads YSASDPLTLL…RERLIDALES (121 aa). Residues Cys-71 and Cys-74 each act as nucleophile in the active site. Cystine bridges form between Cys-71–Cys-74 and Cys-102–Cys-111. N-linked (GlcNAc...) asparagine glycosylation is found at Asn-131 and Asn-244. Cys-394 and Cys-406 form a disulfide bridge. In terms of domain architecture, ERV/ALR sulfhydryl oxidase spans 397–504; it reads SESHFRGFPC…EDPQFPKVQW (108 aa). FAD contacts are provided by Arg-402, Trp-409, and His-413. The residue at position 427 (Ser-427) is a Phosphoserine. An intrachain disulfide couples Cys-450 to Cys-453. Residues Asp-452, His-456, 479–486, Lys-501, and Trp-504 contribute to the FAD site; that span reads WTSHNRVN. Cys-510 and Cys-513 are joined by a disulfide.

This sequence belongs to the quiescin-sulfhydryl oxidase (QSOX) family. Monomer. FAD is required as a cofactor. In terms of processing, N-glycosylated. O-glycosylated on Thr and Ser residues. In terms of tissue distribution, detected in endometrium and in uterus glandular epithelial cells (at protein level). Expressed in testis, placenta, pancreas, lung, ovary, endometrium, but not in brain, liver and kidney tissues. Higher expression in epithelial cells.

The protein resides in the secreted. It carries out the reaction 2 R'C(R)SH + O2 = R'C(R)S-S(R)CR' + H2O2. Catalyzes the oxidation of sulfhydryl groups in peptide and protein thiols to disulfides with the reduction of oxygen to hydrogen peroxide. Plays a role in disulfide bond formation in a variety of extracellular proteins. In fibroblasts, required for normal incorporation of laminin into the extracellular matrix, and thereby for normal cell-cell adhesion and cell migration. This Cavia porcellus (Guinea pig) protein is Sulfhydryl oxidase 1 (QSOX1).